We begin with the raw amino-acid sequence, 448 residues long: NADP-specific glutamate dehydrogenase (448 aa).

Positions 88, 109, and 112 each coordinate substrate. Lysine 124 (proton donor) is an active-site residue. Residue glycine 163 coordinates substrate. 2 residues coordinate NADP(+): threonine 207 and asparagine 238. Serine 375 serves as a coordination point for substrate.

This sequence belongs to the Glu/Leu/Phe/Val dehydrogenases family. In terms of assembly, homohexamer.

The catalysed reaction is L-glutamate + NADP(+) + H2O = 2-oxoglutarate + NH4(+) + NADPH + H(+). Functionally, catalyzes the reversible oxidative deamination of glutamate to alpha-ketoglutarate and ammonia. The polypeptide is NADP-specific glutamate dehydrogenase (gdhA) (Psychrobacter sp. (strain TAD1)).